A 395-amino-acid chain; its full sequence is MTTPFKRVHLIVMDSVGIGEGPDAKAFDDEGSHTLKHTLEGFEQSLPNLQKLGLGNIEPLPVIDKEVEPQAFYTKMSEASVGKDTMTGHWEIMGLNIMQPFKVYPEGFPEELVNEIETLTGRKVVANRPASGTQIIDEWGEHQMKTGDLIVYTSADPVLQIAAHEDIIPLEELYDICEKVRELTKDPKYLIGRIIARPYIGEPGSFKRTSNRHDYALKPFGRTVMNELKDNGYDVIALGKINDIFDGEGVTESIRTKDNMDGIDKLIETVQRDFNGLSFLNLVDFDALYGHRRDKPGYAQAIKDFDERLSELMNHLQEEDLVIITADHGNDPTADGTDHTREYIPVLMFSPKMTDYHELTIDSTFSSLGATIADNFGVKLPEFGKSYLKEMGVEK.

Positions 14, 286, 291, 327, 328, and 339 each coordinate Mn(2+).

It belongs to the phosphopentomutase family. Mn(2+) is required as a cofactor.

It is found in the cytoplasm. It catalyses the reaction 2-deoxy-alpha-D-ribose 1-phosphate = 2-deoxy-D-ribose 5-phosphate. The enzyme catalyses alpha-D-ribose 1-phosphate = D-ribose 5-phosphate. The protein operates within carbohydrate degradation; 2-deoxy-D-ribose 1-phosphate degradation; D-glyceraldehyde 3-phosphate and acetaldehyde from 2-deoxy-alpha-D-ribose 1-phosphate: step 1/2. Functionally, isomerase that catalyzes the conversion of deoxy-ribose 1-phosphate (dRib-1-P) and ribose 1-phosphate (Rib-1-P) to deoxy-ribose 5-phosphate (dRib-5-P) and ribose 5-phosphate (Rib-5-P), respectively. This is Phosphopentomutase from Staphylococcus saprophyticus subsp. saprophyticus (strain ATCC 15305 / DSM 20229 / NCIMB 8711 / NCTC 7292 / S-41).